The following is a 337-amino-acid chain: Fructose-1,6-bisphosphatase class 1 (337 aa).

Mg(2+) is bound by residues Glu-90, Asp-112, Leu-114, and Asp-115. Substrate is bound by residues 115–118, Asn-211, and Lys-277; that span reads DGSS. Glu-283 contacts Mg(2+).

It belongs to the FBPase class 1 family. As to quaternary structure, homotetramer. It depends on Mg(2+) as a cofactor.

Its subcellular location is the cytoplasm. It catalyses the reaction beta-D-fructose 1,6-bisphosphate + H2O = beta-D-fructose 6-phosphate + phosphate. The protein operates within carbohydrate biosynthesis; gluconeogenesis. This is Fructose-1,6-bisphosphatase class 1 from Azotobacter vinelandii (strain DJ / ATCC BAA-1303).